We begin with the raw amino-acid sequence, 419 residues long: Serine hydroxymethyltransferase (419 aa).

(6S)-5,6,7,8-tetrahydrofolate-binding positions include L121 and 125–127; that span reads GHL. Position 229 is an N6-(pyridoxal phosphate)lysine (K229). Position 354 to 356 (354 to 356) interacts with (6S)-5,6,7,8-tetrahydrofolate; that stretch reads SPF.

The protein belongs to the SHMT family. In terms of assembly, homodimer. Pyridoxal 5'-phosphate is required as a cofactor.

It is found in the cytoplasm. It carries out the reaction (6R)-5,10-methylene-5,6,7,8-tetrahydrofolate + glycine + H2O = (6S)-5,6,7,8-tetrahydrofolate + L-serine. Its pathway is one-carbon metabolism; tetrahydrofolate interconversion. The protein operates within amino-acid biosynthesis; glycine biosynthesis; glycine from L-serine: step 1/1. In terms of biological role, catalyzes the reversible interconversion of serine and glycine with tetrahydrofolate (THF) serving as the one-carbon carrier. This reaction serves as the major source of one-carbon groups required for the biosynthesis of purines, thymidylate, methionine, and other important biomolecules. Also exhibits THF-independent aldolase activity toward beta-hydroxyamino acids, producing glycine and aldehydes, via a retro-aldol mechanism. The chain is Serine hydroxymethyltransferase from Coxiella burnetii (strain CbuK_Q154) (Coxiella burnetii (strain Q154)).